We begin with the raw amino-acid sequence, 244 residues long: tRNA (guanine-N(1)-)-methyltransferase (244 aa).

S-adenosyl-L-methionine-binding positions include G113 and I133–L138.

This sequence belongs to the RNA methyltransferase TrmD family. In terms of assembly, homodimer.

It is found in the cytoplasm. It catalyses the reaction guanosine(37) in tRNA + S-adenosyl-L-methionine = N(1)-methylguanosine(37) in tRNA + S-adenosyl-L-homocysteine + H(+). Its function is as follows. Specifically methylates guanosine-37 in various tRNAs. The chain is tRNA (guanine-N(1)-)-methyltransferase from Bacillus cereus (strain B4264).